Here is a 249-residue protein sequence, read N- to C-terminus: Putative TrmH family tRNA/rRNA methyltransferase YacO (249 aa).

S-adenosyl-L-methionine contacts are provided by Gly-198, Leu-218, and Leu-227.

The protein belongs to the class IV-like SAM-binding methyltransferase superfamily. RNA methyltransferase TrmH family.

The protein is Putative TrmH family tRNA/rRNA methyltransferase YacO (yacO) of Bacillus subtilis (strain 168).